We begin with the raw amino-acid sequence, 62 residues long: Insect toxin BsIT4 (62 aa).

In terms of domain architecture, LCN-type CS-alpha/beta spans 1 to 62 (DGYIKGNKGC…WLYAATNTCG (62 aa)). Disulfide bonds link C10-C61, C14-C35, C21-C42, and C25-C44.

The protein belongs to the long (4 C-C) scorpion toxin superfamily. Sodium channel inhibitor family. Beta subfamily. Expressed by the venom gland.

It localises to the secreted. In terms of biological role, depressant insect beta-toxins cause a transient contraction paralysis followed by a slow flaccid paralysis. They bind voltage-independently at site-4 of sodium channels (Nav) and shift the voltage of activation toward more negative potentials thereby affecting sodium channel activation and promoting spontaneous and repetitive firing. This toxin is active only on insects. This is Insect toxin BsIT4 from Hottentotta tamulus sindicus (Scorpion).